A 226-amino-acid chain; its full sequence is tRNA (guanine-N(7)-)-methyltransferase (226 aa).

The disordered stretch occupies residues 1-21; sequence MTHPQQPHGPLRSFGRLKSRP. Residues Glu-59, Glu-84, Asp-111, and Asp-133 each contribute to the S-adenosyl-L-methionine site. Residue Asp-133 is part of the active site. Lys-137 contributes to the substrate binding site. Positions 139 to 144 are interaction with RNA; that stretch reads RHNKRR. Substrate contacts are provided by residues Asp-169 and 206 to 209; that span reads TRYE.

It belongs to the class I-like SAM-binding methyltransferase superfamily. TrmB family.

It carries out the reaction guanosine(46) in tRNA + S-adenosyl-L-methionine = N(7)-methylguanosine(46) in tRNA + S-adenosyl-L-homocysteine. Its pathway is tRNA modification; N(7)-methylguanine-tRNA biosynthesis. Its function is as follows. Catalyzes the formation of N(7)-methylguanine at position 46 (m7G46) in tRNA. The chain is tRNA (guanine-N(7)-)-methyltransferase from Caulobacter sp. (strain K31).